Here is a 377-residue protein sequence, read N- to C-terminus: Dehydrogenase/reductase SDR family member 13 (377 aa).

Positions 1–25 (MEALLLGVGLLLGAYVLVYYNLVKA) are cleaved as a signal peptide. Residues serine 46 and isoleucine 48 each coordinate NAD(+). A substrate-binding site is contributed by serine 170. Residues tyrosine 197, lysine 201, and serine 232 each coordinate NAD(+). Tyrosine 197 serves as the catalytic Proton acceptor. The segment at 310 to 363 (LAGLGPGEDAESDEDSQPEDPGTPSSPSSPHPEEPTVSELYPSPQSSTDRSTVT) is disordered. Over residues 317-327 (EDAESDEDSQP) the composition is skewed to acidic residues. Positions 328–337 (EDPGTPSSPS) are enriched in low complexity. Residues 352–363 (SPQSSTDRSTVT) are compositionally biased toward polar residues.

This sequence belongs to the short-chain dehydrogenases/reductases (SDR) family.

The protein localises to the secreted. Its function is as follows. Putative oxidoreductase. The polypeptide is Dehydrogenase/reductase SDR family member 13 (DHRS13) (Bos taurus (Bovine)).